The chain runs to 186 residues: Putative manganese efflux pump MntP (186 aa).

6 helical membrane passes run 1–21, 41–61, 62–82, 105–127, 139–159, and 163–183; these read MSFL…FAVS, VFFG…GSAV, SGFV…FIGG, LFLL…AFLG, CVTF…GHFF, and VEIL…AEHM.

The protein belongs to the MntP (TC 9.B.29) family.

The protein localises to the cell membrane. Its function is as follows. Probably functions as a manganese efflux pump. The chain is Putative manganese efflux pump MntP from Methanosarcina mazei (strain ATCC BAA-159 / DSM 3647 / Goe1 / Go1 / JCM 11833 / OCM 88) (Methanosarcina frisia).